The chain runs to 400 residues: Formate-dependent phosphoribosylglycinamide formyltransferase (400 aa).

N(1)-(5-phospho-beta-D-ribosyl)glycinamide contacts are provided by residues 22 to 23 (EL) and Glu-82. ATP contacts are provided by residues Arg-115, Lys-156, 161–166 (SSGKGQ), 196–199 (EGFI), and Glu-204. The ATP-grasp domain maps to 120–309 (RLAAETLGLP…EFALHARAIL (190 aa)). 2 residues coordinate Mg(2+): Glu-268 and Glu-280. N(1)-(5-phospho-beta-D-ribosyl)glycinamide is bound by residues Asp-287, Lys-361, and 368–369 (RR).

This sequence belongs to the PurK/PurT family. In terms of assembly, homodimer.

It carries out the reaction N(1)-(5-phospho-beta-D-ribosyl)glycinamide + formate + ATP = N(2)-formyl-N(1)-(5-phospho-beta-D-ribosyl)glycinamide + ADP + phosphate + H(+). It functions in the pathway purine metabolism; IMP biosynthesis via de novo pathway; N(2)-formyl-N(1)-(5-phospho-D-ribosyl)glycinamide from N(1)-(5-phospho-D-ribosyl)glycinamide (formate route): step 1/1. In terms of biological role, involved in the de novo purine biosynthesis. Catalyzes the transfer of formate to 5-phospho-ribosyl-glycinamide (GAR), producing 5-phospho-ribosyl-N-formylglycinamide (FGAR). Formate is provided by PurU via hydrolysis of 10-formyl-tetrahydrofolate. This is Formate-dependent phosphoribosylglycinamide formyltransferase from Xanthomonas axonopodis pv. citri (strain 306).